Consider the following 88-residue polypeptide: Insulin-related peptide 4 (88 aa).

Residues 1 to 19 (MKLTLIILLVVAYSWCSEA) form the signal peptide. Positions 20–45 (QNEARVFCGRVLSERLAALCWGPNSV) are excised as a propeptide. Arg-65 bears the Arginine amide mark. The propeptide occupies 69-88 (GLATECCDKACTVEELLSYC).

It belongs to the insulin family. As to expression, DAGWWLTRGAARSLGGVR-amide: Expressed in corpora cardiaca (CC), corpora allata (CA), antennal lobe (AL) and gnathal ganglion (GNG) (at protein level). Expression in CC and CA detected in most animals, in AL and GNG in few animals (at protein level).

The protein resides in the secreted. This is Insulin-related peptide 4 from Agrotis ipsilon (Black cutworm moth).